Reading from the N-terminus, the 210-residue chain is Urease accessory protein UreF (210 aa).

This sequence belongs to the UreF family. As to quaternary structure, ureD, UreF and UreG form a complex that acts as a GTP-hydrolysis-dependent molecular chaperone, activating the urease apoprotein by helping to assemble the nickel containing metallocenter of UreC. The UreE protein probably delivers the nickel.

It is found in the cytoplasm. Functionally, required for maturation of urease via the functional incorporation of the urease nickel metallocenter. This Cereibacter sphaeroides (strain ATCC 17025 / ATH 2.4.3) (Rhodobacter sphaeroides) protein is Urease accessory protein UreF.